The sequence spans 417 residues: Glutamyl-tRNA reductase (417 aa).

Residues 49–52 (TCNR), Ser-107, 112–114 (EEQ), and Gln-118 contribute to the substrate site. The Nucleophile role is filled by Cys-50. 187–192 (GTGEVS) contacts NADP(+).

Belongs to the glutamyl-tRNA reductase family. In terms of assembly, homodimer.

It catalyses the reaction (S)-4-amino-5-oxopentanoate + tRNA(Glu) + NADP(+) = L-glutamyl-tRNA(Glu) + NADPH + H(+). Its pathway is porphyrin-containing compound metabolism; protoporphyrin-IX biosynthesis; 5-aminolevulinate from L-glutamyl-tRNA(Glu): step 1/2. In terms of biological role, catalyzes the NADPH-dependent reduction of glutamyl-tRNA(Glu) to glutamate 1-semialdehyde (GSA). The protein is Glutamyl-tRNA reductase of Cenarchaeum symbiosum (strain A).